The following is a 348-amino-acid chain: tRNA N6-adenosine threonylcarbamoyltransferase (348 aa).

The Fe cation site is built by histidine 116 and histidine 120. Residues 138-142, aspartate 171, glycine 184, and asparagine 282 each bind substrate; that span reads IISGG. Aspartate 310 serves as a coordination point for Fe cation.

It belongs to the KAE1 / TsaD family. It depends on Fe(2+) as a cofactor.

It is found in the cytoplasm. The catalysed reaction is L-threonylcarbamoyladenylate + adenosine(37) in tRNA = N(6)-L-threonylcarbamoyladenosine(37) in tRNA + AMP + H(+). Functionally, required for the formation of a threonylcarbamoyl group on adenosine at position 37 (t(6)A37) in tRNAs that read codons beginning with adenine. Is involved in the transfer of the threonylcarbamoyl moiety of threonylcarbamoyl-AMP (TC-AMP) to the N6 group of A37, together with TsaE and TsaB. TsaD likely plays a direct catalytic role in this reaction. The chain is tRNA N6-adenosine threonylcarbamoyltransferase from Ehrlichia ruminantium (strain Gardel).